Reading from the N-terminus, the 610-residue chain is Ecto-NOX disulfide-thiol exchanger 2 (610 aa).

The region spanning 128–207 is the RRM domain; sequence KTVFVGGLPE…GRLHVDFAQA (80 aa). Coiled-coil stretches lie at residues 293–328 and 381–505; these read IQSA…LSGI and RREE…KESC.

The protein belongs to the ENOX family. The cofactor is Cu cation. Post-translationally, glycosylated. As to expression, found in the sera of cancer patients with a wide variety of cancers including breast, prostate, lung and ovarian cancers, leukemias, and lymphomas. Not found in the serum of healthy volunteers or patients with disorders other than cancer. Probably shed into serum by cancer cells. Found on the cell borders of renal, kidney and ovarian carcinomas but not on the borders of surrounding non-cancerous stromal cells.

The protein resides in the cell membrane. The protein localises to the secreted. It localises to the extracellular space. Inhibited by the antitumor sulfonylurea LY181984, the vabilloid capsaicin, and retinoids. In terms of biological role, may be involved in cell growth. Probably acts as a terminal oxidase of plasma electron transport from cytosolic NAD(P)H via hydroquinones to acceptors at the cell surface. Hydroquinone oxidase activity alternates with a protein disulfide-thiol interchange/oxidoreductase activity which may control physical membrane displacements associated with vesicle budding or cell enlargement. The activities oscillate with a period length of 22 minutes and play a role in control of the ultradian cellular biological clock. The protein is Ecto-NOX disulfide-thiol exchanger 2 (ENOX2) of Homo sapiens (Human).